We begin with the raw amino-acid sequence, 116 residues long: Endocuticle structural glycoprotein SgAbd-4 (116 aa).

Q1 carries the pyrrolidone carboxylic acid modification. Residues D20–P92 form the Chitin-binding type R&amp;R domain. O-linked (HexNAc...) threonine glycans are attached at residues T90 and T107. A glycan (O-linked (HexNAc...) serine) is linked at S110. An O-linked (HexNAc...) threonine glycan is attached at T111. A Proline amide modification is found at P116.

Its function is as follows. Component of the abdominal endocuticle. This is Endocuticle structural glycoprotein SgAbd-4 from Schistocerca gregaria (Desert locust).